The chain runs to 249 residues: tRNA pseudouridine synthase A (249 aa).

Catalysis depends on aspartate 53, which acts as the Nucleophile. Tyrosine 111 is a substrate binding site.

Belongs to the tRNA pseudouridine synthase TruA family. As to quaternary structure, homodimer.

It catalyses the reaction uridine(38/39/40) in tRNA = pseudouridine(38/39/40) in tRNA. Functionally, formation of pseudouridine at positions 38, 39 and 40 in the anticodon stem and loop of transfer RNAs. In Streptococcus mutans serotype c (strain ATCC 700610 / UA159), this protein is tRNA pseudouridine synthase A.